Consider the following 525-residue polypeptide: GMP synthase [glutamine-hydrolyzing] (525 aa).

The region spanning 9–207 is the Glutamine amidotransferase type-1 domain; sequence RILILDFGSQ…VLDICACEAL (199 aa). Catalysis depends on Cys86, which acts as the Nucleophile. Residues His181 and Glu183 contribute to the active site. The region spanning 208-400 is the GMPS ATP-PPase domain; sequence WTPATIIEDA…LGLPYDMLYR (193 aa). An ATP-binding site is contributed by 235–241; that stretch reads SGGVDSS.

Homodimer.

It catalyses the reaction XMP + L-glutamine + ATP + H2O = GMP + L-glutamate + AMP + diphosphate + 2 H(+). It participates in purine metabolism; GMP biosynthesis; GMP from XMP (L-Gln route): step 1/1. Catalyzes the synthesis of GMP from XMP. The protein is GMP synthase [glutamine-hydrolyzing] of Yersinia enterocolitica serotype O:8 / biotype 1B (strain NCTC 13174 / 8081).